The chain runs to 305 residues: Methionyl-tRNA formyltransferase (305 aa).

Residue 111-114 participates in (6S)-5,6,7,8-tetrahydrofolate binding; it reads SLLP.

This sequence belongs to the Fmt family.

The catalysed reaction is L-methionyl-tRNA(fMet) + (6R)-10-formyltetrahydrofolate = N-formyl-L-methionyl-tRNA(fMet) + (6S)-5,6,7,8-tetrahydrofolate + H(+). Its function is as follows. Attaches a formyl group to the free amino group of methionyl-tRNA(fMet). The formyl group appears to play a dual role in the initiator identity of N-formylmethionyl-tRNA by promoting its recognition by IF2 and preventing the misappropriation of this tRNA by the elongation apparatus. In Helicobacter acinonychis (strain Sheeba), this protein is Methionyl-tRNA formyltransferase.